Reading from the N-terminus, the 184-residue chain is UPF0149 protein Pmen_0324 (184 aa).

This sequence belongs to the UPF0149 family.

The polypeptide is UPF0149 protein Pmen_0324 (Ectopseudomonas mendocina (strain ymp) (Pseudomonas mendocina)).